The chain runs to 258 residues: MSATAPFKTLSAKAAFQLDQELMSTGEFSIDQLMELAGLAVAKTIYKEYPPNETTTTTKNKFNPNKVLVLVGPGNNGGDGLVAARHLKLWNYDPIIYYPKRPASNQLYSRLIKQLQDLNVPELTTLTEVKHLLDSRDSKIKIIIDSIFGFSFKPPIREPFKDLINYLGQNHDHLPPIVSVDIPSGWDVDEGPGTEIDIQASCLISLTAPKPCAKLFVNSGPDKIHYLGGRFINPRIAKEYGIEDIVNKYQGDELIVKL.

The 230-residue stretch at 15–244 (AFQLDQELMS…RIAKEYGIED (230 aa)) folds into the YjeF N-terminal domain. Residue 75–79 (NNGGD) coordinates (6S)-NADPHX. Residues Asn76 and Asp145 each contribute to the K(+) site. (6S)-NADPHX-binding positions include 149-155 (GFSFKPP) and Asp181. A K(+)-binding site is contributed by Ser184.

Belongs to the NnrE/AIBP family. It depends on K(+) as a cofactor.

The protein resides in the cytoplasm. Its subcellular location is the mitochondrion. The enzyme catalyses (6R)-NADHX = (6S)-NADHX. It carries out the reaction (6R)-NADPHX = (6S)-NADPHX. In terms of biological role, catalyzes the epimerization of the S- and R-forms of NAD(P)HX, a damaged form of NAD(P)H that is a result of enzymatic or heat-dependent hydration. This is a prerequisite for the S-specific NAD(P)H-hydrate dehydratase to allow the repair of both epimers of NAD(P)HX. The sequence is that of NAD(P)H-hydrate epimerase from Candida albicans (strain WO-1) (Yeast).